The sequence spans 273 residues: MVAASKEFVFHHTFKDVSQLEDGDFFKSPEEIHYNAEWFILVIRTKDQLEAYLHCDNEKDDNVAWTVDAEFSLKIASSSGSYAMKFQKGCFDGFGLGWNDFVSWDSLTEDFLYDNSFTIEACVKITKMTGFSKDVLRSFDESEKRFSDVILVVGDEKFYVLKLFLASHSSYFNALFLGKFKEADQSEVTLQNIDPTDFQSLLEVLYGEPAIDDGTIDGVLLLAHMLDVTLAIRKCEEFLIEKSMKSMRELLKMANQYQLENLKTVCISKINTI.

The MATH domain maps to 7–123 (EFVFHHTFKD…DNSFTIEACV (117 aa)). A BTB domain is found at 147–206 (SDVILVVGDEKFYVLKLFLASHSSYFNALFLGKFKEADQSEVTLQNIDPTDFQSLLEVLY).

In terms of assembly, interacts with cul-3.

It participates in protein modification; protein ubiquitination. In terms of biological role, probable substrate-specific adapter of an E3 ubiquitin-protein ligase complex which mediates the ubiquitination and subsequent proteasomal degradation of target proteins. This chain is BTB and MATH domain-containing protein 15 (bath-15), found in Caenorhabditis elegans.